Here is a 559-residue protein sequence, read N- to C-terminus: 2-isopropylmalate synthase (559 aa).

The Pyruvate carboxyltransferase domain maps to 33–307; the sequence is PIWCSSDLRD…NPELDFSDID (275 aa). Mg(2+) is bound by residues Asp-42, His-246, His-248, and Asn-282. The interval 439–559 is regulatory domain; it reads ANTPYALVSH…SLSEQQAKAA (121 aa).

It belongs to the alpha-IPM synthase/homocitrate synthase family. LeuA type 2 subfamily. In terms of assembly, homodimer. Mg(2+) serves as cofactor.

It is found in the cytoplasm. It carries out the reaction 3-methyl-2-oxobutanoate + acetyl-CoA + H2O = (2S)-2-isopropylmalate + CoA + H(+). The protein operates within amino-acid biosynthesis; L-leucine biosynthesis; L-leucine from 3-methyl-2-oxobutanoate: step 1/4. In terms of biological role, catalyzes the condensation of the acetyl group of acetyl-CoA with 3-methyl-2-oxobutanoate (2-ketoisovalerate) to form 3-carboxy-3-hydroxy-4-methylpentanoate (2-isopropylmalate). This chain is 2-isopropylmalate synthase, found in Pseudomonas fluorescens (strain ATCC BAA-477 / NRRL B-23932 / Pf-5).